The chain runs to 345 residues: Phosphoribosylformylglycinamidine cyclo-ligase (345 aa).

It belongs to the AIR synthase family.

The protein resides in the cytoplasm. The catalysed reaction is 2-formamido-N(1)-(5-O-phospho-beta-D-ribosyl)acetamidine + ATP = 5-amino-1-(5-phospho-beta-D-ribosyl)imidazole + ADP + phosphate + H(+). The protein operates within purine metabolism; IMP biosynthesis via de novo pathway; 5-amino-1-(5-phospho-D-ribosyl)imidazole from N(2)-formyl-N(1)-(5-phospho-D-ribosyl)glycinamide: step 2/2. The sequence is that of Phosphoribosylformylglycinamidine cyclo-ligase from Mannheimia succiniciproducens (strain KCTC 0769BP / MBEL55E).